A 138-amino-acid chain; its full sequence is Gamma-glutamylaminecyclotransferase (138 aa).

Glu63 functions as the Proton acceptor in the catalytic mechanism.

Belongs to the gamma-glutamylcyclotransferase family.

The enzyme catalyses epsilon-(gamma-L-glutamyl)-L-lysine = 5-oxo-L-proline + L-lysine. Functionally, may contribute to degradation of proteins cross-linked by transglutaminases by degrading the cross-link between a lysine and a glutamic acid residue. Catalyzes the formation of 5-oxo-L-proline from L-gamma-glutamyl-L-epsilon-lysine. The chain is Gamma-glutamylaminecyclotransferase (ggact) from Xenopus laevis (African clawed frog).